The sequence spans 143 residues: Ribosome maturation factor RimP (143 aa).

The protein belongs to the RimP family.

It localises to the cytoplasm. In terms of biological role, required for maturation of 30S ribosomal subunits. The polypeptide is Ribosome maturation factor RimP (Neisseria meningitidis serogroup C (strain 053442)).